Consider the following 475-residue polypeptide: Trifunctional enzyme subunit beta, mitochondrial (475 aa).

The N-terminal 34 residues, 1-34 (MISLLTYTLKNLPNTSKWALRFCMRPLSSSSQLQ), are a transit peptide targeting the mitochondrion. The residue at position 73 (lysine 73) is an N6-acetyllysine; alternate. The residue at position 73 (lysine 73) is an N6-succinyllysine; alternate. Cysteine 139 acts as the Acyl-thioester intermediate in catalysis. The stretch at 174–221 (IRHSRKMRKMMLDLNKAKTLAQRLSIISKFRLNFLSPELPAVSEFSTS) is an intramembrane region. The residue at position 189 (lysine 189) is an N6-acetyllysine; alternate. Lysine 189 is subject to N6-succinyllysine; alternate. Residues lysine 191 and lysine 292 each carry the N6-succinyllysine modification. The residue at position 294 (lysine 294) is an N6-acetyllysine; alternate. An N6-succinyllysine; alternate modification is found at lysine 294. At lysine 299 the chain carries N6-acetyllysine. N6-acetyllysine; alternate is present on lysine 333. Lysine 333 carries the N6-succinyllysine; alternate modification. 2 positions are modified to N6-acetyllysine: lysine 349 and lysine 362. Cysteine 459 (proton donor/acceptor) is an active-site residue.

The protein belongs to the thiolase-like superfamily. Thiolase family. As to quaternary structure, heterotetramer of 2 alpha/HADHA and 2 beta/HADHB subunits; forms the mitochondrial trifunctional enzyme. Also purified as higher order heterooligomers including a 4 alpha/HADHA and 4 beta/HADHB heterooligomer which physiological significance remains unclear. The mitochondrial trifunctional enzyme interacts with MTLN. Interacts with RSAD2/viperin.

It localises to the mitochondrion. Its subcellular location is the mitochondrion inner membrane. It is found in the mitochondrion outer membrane. The protein localises to the endoplasmic reticulum. The enzyme catalyses an acyl-CoA + acetyl-CoA = a 3-oxoacyl-CoA + CoA. The catalysed reaction is butanoyl-CoA + acetyl-CoA = 3-oxohexanoyl-CoA + CoA. It catalyses the reaction hexanoyl-CoA + acetyl-CoA = 3-oxooctanoyl-CoA + CoA. It carries out the reaction octanoyl-CoA + acetyl-CoA = 3-oxodecanoyl-CoA + CoA. The enzyme catalyses decanoyl-CoA + acetyl-CoA = 3-oxododecanoyl-CoA + CoA. The catalysed reaction is dodecanoyl-CoA + acetyl-CoA = 3-oxotetradecanoyl-CoA + CoA. It catalyses the reaction tetradecanoyl-CoA + acetyl-CoA = 3-oxohexadecanoyl-CoA + CoA. The protein operates within lipid metabolism; fatty acid beta-oxidation. Mitochondrial trifunctional enzyme catalyzes the last three of the four reactions of the mitochondrial beta-oxidation pathway. The mitochondrial beta-oxidation pathway is the major energy-producing process in tissues and is performed through four consecutive reactions breaking down fatty acids into acetyl-CoA. Among the enzymes involved in this pathway, the trifunctional enzyme exhibits specificity for long-chain fatty acids. Mitochondrial trifunctional enzyme is a heterotetrameric complex composed of two proteins, the trifunctional enzyme subunit alpha/HADHA carries the 2,3-enoyl-CoA hydratase and the 3-hydroxyacyl-CoA dehydrogenase activities, while the trifunctional enzyme subunit beta/HADHB described here bears the 3-ketoacyl-CoA thiolase activity. The chain is Trifunctional enzyme subunit beta, mitochondrial (HADHB) from Bos taurus (Bovine).